The following is a 219-amino-acid chain: Ribose-5-phosphate isomerase A (219 aa).

Substrate is bound by residues 28-31 (TGST), 81-84 (DGAD), and 94-97 (KGGG). The active-site Proton acceptor is Glu103. Lys121 contacts substrate.

The protein belongs to the ribose 5-phosphate isomerase family. As to quaternary structure, homodimer.

The catalysed reaction is aldehydo-D-ribose 5-phosphate = D-ribulose 5-phosphate. Its pathway is carbohydrate degradation; pentose phosphate pathway; D-ribose 5-phosphate from D-ribulose 5-phosphate (non-oxidative stage): step 1/1. Its function is as follows. Catalyzes the reversible conversion of ribose-5-phosphate to ribulose 5-phosphate. The sequence is that of Ribose-5-phosphate isomerase A from Shewanella pealeana (strain ATCC 700345 / ANG-SQ1).